The primary structure comprises 140 residues: uncharacterized protein (140 aa).

This is an uncharacterized protein from Xylella fastidiosa (strain Temecula1 / ATCC 700964).